Here is a 579-residue protein sequence, read N- to C-terminus: Acyl-coenzyme A synthetase ACSM5, mitochondrial (579 aa).

A mitochondrion-targeting transit peptide spans 1–26 (MRPWLRHLVLQALRNSRAFCGSHGKP). K97 is subject to N6-acetyllysine; alternate. K97 carries the post-translational modification N6-succinyllysine; alternate. K152 carries the post-translational modification N6-acetyllysine. ATP is bound at residue 230 to 238 (TSGTTGAPK). K303 is modified (N6-acetyllysine; alternate). K303 carries the post-translational modification N6-succinyllysine; alternate. ATP contacts are provided by residues 368-373 (EGYGQS), D455, R470, and K566.

Belongs to the ATP-dependent AMP-binding enzyme family. The cofactor is Mg(2+). Requires Mn(2+) as cofactor. In terms of tissue distribution, detected in kidney and liver.

It is found in the mitochondrion matrix. The enzyme catalyses a medium-chain fatty acid + ATP + CoA = a medium-chain fatty acyl-CoA + AMP + diphosphate. In terms of biological role, catalyzes the activation of fatty acids by CoA to produce an acyl-CoA, the first step in fatty acid metabolism. The sequence is that of Acyl-coenzyme A synthetase ACSM5, mitochondrial (ACSM5) from Homo sapiens (Human).